The chain runs to 254 residues: Protein PET122, mitochondrial (254 aa).

The transit peptide at 1–8 (MLTITKRL) directs the protein to the mitochondrion. Residues 185-254 (QAAALALFGR…IKRRGFEINT (70 aa)) are essential for PET122 function.

The protein localises to the mitochondrion inner membrane. In terms of biological role, required for expression of the mitochondrial gene for cytochrome c oxidase subunit 3 (COX3). PET122 seems to work by directly interacting with the small ribosomal subunit to promote translation initiation on the COX3 mRNA. The polypeptide is Protein PET122, mitochondrial (PET122) (Saccharomyces cerevisiae (strain ATCC 204508 / S288c) (Baker's yeast)).